Consider the following 155-residue polypeptide: Ribonuclease H (155 aa).

In terms of domain architecture, RNase H type-1 spans 1–142 (MLKQVEIFTD…CDELARAAAS (142 aa)). Mg(2+)-binding residues include aspartate 10, glutamate 48, aspartate 70, and aspartate 134.

It belongs to the RNase H family. In terms of assembly, monomer. It depends on Mg(2+) as a cofactor.

It localises to the cytoplasm. It catalyses the reaction Endonucleolytic cleavage to 5'-phosphomonoester.. Endonuclease that specifically degrades the RNA of RNA-DNA hybrids. The sequence is that of Ribonuclease H from Klebsiella pneumoniae (strain 342).